We begin with the raw amino-acid sequence, 85 residues long: MSERGNRKTQVGVVVSDKMDKTAVVKVDRLVKHPVYNKYIKRSAKYKAHDMDNAAKIGDRVLIVETRPLSKDKRWKIRQIIESKG.

Belongs to the universal ribosomal protein uS17 family. Part of the 30S ribosomal subunit.

One of the primary rRNA binding proteins, it binds specifically to the 5'-end of 16S ribosomal RNA. This Citrifermentans bemidjiense (strain ATCC BAA-1014 / DSM 16622 / JCM 12645 / Bem) (Geobacter bemidjiensis) protein is Small ribosomal subunit protein uS17.